Consider the following 233-residue polypeptide: Ribonuclease HII (233 aa).

Residues 21-211 enclose the RNase H type-2 domain; it reads KIIAGVDEVG…LDALPQWRHL (191 aa). Asp27, Glu28, and Asp119 together coordinate a divalent metal cation.

It belongs to the RNase HII family. It depends on Mn(2+) as a cofactor. The cofactor is Mg(2+).

It localises to the cytoplasm. It catalyses the reaction Endonucleolytic cleavage to 5'-phosphomonoester.. Its function is as follows. Endonuclease that specifically degrades the RNA of RNA-DNA hybrids. This Streptomyces coelicolor (strain ATCC BAA-471 / A3(2) / M145) protein is Ribonuclease HII (rnhB).